We begin with the raw amino-acid sequence, 215 residues long: Large ribosomal subunit protein uL3 (215 aa).

Residues 136 to 155 form a disordered region; it reads GVSISHRSHGSTGQRQDPGK. Glutamine 151 carries the N5-methylglutamine modification.

It belongs to the universal ribosomal protein uL3 family. Part of the 50S ribosomal subunit. Forms a cluster with proteins L14 and L19. Post-translationally, methylated by PrmB.

Functionally, one of the primary rRNA binding proteins, it binds directly near the 3'-end of the 23S rRNA, where it nucleates assembly of the 50S subunit. This Rickettsia rickettsii (strain Iowa) protein is Large ribosomal subunit protein uL3.